The following is a 164-amino-acid chain: MKGKKSVISRLNKLLVGELVAADQYFVHSRMYQEWGLQKLYERIDHERMDELEHADLLIRRILFLEGTPDISKRPGPNIGKDVPSMLKNDLDYELAVIAELKEVIAHCEGPKRTMTAAASCSTILEETEQDHTLWLEQQLGLIARMGLQNYIQSAAGDIAQGAS.

The Ferritin-like diiron domain maps to 1 to 147; the sequence is MKGKKSVISR…QQLGLIARMG (147 aa). Fe cation-binding residues include glutamate 18, glutamate 51, histidine 54, glutamate 94, glutamate 129, and histidine 132.

Belongs to the bacterioferritin family. As to quaternary structure, heterooligomer of 24 subunits, arranged as 12 dimers, that are packed together to form an approximately spherical molecule with a central cavity, in which large amounts of iron can be deposited.

It catalyses the reaction 4 Fe(2+) + O2 + 4 H(+) = 4 Fe(3+) + 2 H2O. The enzyme catalyses Fe(2+)(in) = Fe(2+)(out). In terms of biological role, iron-storage protein, whose ferroxidase center binds Fe(2+), oxidizes it using dioxygen to Fe(3+), and participates in the subsequent Fe(3+) oxide mineral core formation within the central cavity of the BFR protein shell. The chain is Bacterial ferritin from Paramagnetospirillum magnetotacticum (Aquaspirillum magnetotacticum).